Consider the following 83-residue polypeptide: Arminin 3b (83 aa).

The signal sequence occupies residues 1–18 (MKIVFAILFLTFIALTYA). Positions 19–57 (RSFEDLKEEIKNEIEKEIFDDLEEESDELDNNVKKFNDA) are excised as a propeptide. Position 80 is a serine amide (serine 80).

Belongs to the arminin family. Expressed in entodermal epithelium along the body column.

The protein resides in the secreted. It is found in the target cell membrane. Functionally, antimicrobial peptide with a broad-spectrum antimicrobial activity. Keeps its antibacterial activity under a wide range of salt concentrations that mimic physiological conditions of human blood, which is surprising, since Hydra is an obligate freshwater animal with nearly no salt tolerance. Does not affect red blood cells. This is Arminin 3b from Hydra vulgaris (Hydra).